A 555-amino-acid chain; its full sequence is Protein tyrosine phosphatase-like protein egg-3 (555 aa).

2 short sequence motifs (D-box) span residues 96–99 (RILL) and 130–133 (RDRL). In terms of domain architecture, Tyrosine-protein phosphatase spans 207-514 (FVQEFNRLDR…LFIYRVILRW (308 aa)). An RXXL motif; required for cortical localization motif is present at residues 253–256 (RVKL). Residues 266–269 (RNEL) carry the RXXL motif motif. 2 consecutive short sequence motifs (RXXL motif; required for cortical localization) follow at residues 509 to 512 (RVIL) and 525 to 528 (RAAL).

It belongs to the protein-tyrosine phosphatase family. Part of a complex, consisting of pseudophosphatases egg-3, egg-4, egg-5 and kinase mbk-2; this complex is required for the oocyte-to-zygote transition. Interacts (via tyrosine-protein phosphatase domain) with kinase mbk-2 (via N-terminus); the interaction does not affect mbk-2 kinase activity, is enhanced by mbk-2 tyrosine phosphorylation status and requires prior binding of mbk-2 to egg-4 and egg-5. Interacts with egg-4.

It is found in the cytoplasm. It localises to the cell cortex. In terms of biological role, probable pseudophosphatase required for the oocyte-to-zygote transition during which it regulates the polarized dispersal of the cortical actin cytoskeleton, the synthesis of the eggshell chitin layer and the formation of the polar bodies after meiosis I and II. Acts as a scaffold to tether kinase mbk-2 and pseudophosphatases egg-4 and egg-5 to the oocyte cortex and thus restricts mbk-2 activity to the cortex during meiosis I. Regulates mbk-2 localization to cytoplasmic foci during meiosis II. Also required for chitin synthase chs-1 localization to the cell cortex of unfertilized oocytes and to cytoplasmic foci in the fertilized embryo. This Caenorhabditis elegans protein is Protein tyrosine phosphatase-like protein egg-3.